A 253-amino-acid polypeptide reads, in one-letter code: Complement C1q subcomponent subunit B (253 aa).

A signal peptide spans 1–25 (MKTQWSEILTPLLLLLLGLLHVSWA). At Gln-26 the chain carries Pyrrolidone carboxylic acid. The Collagen-like domain maps to 29–112 (CTGSPGIPGV…GPRGPKGGSG (84 aa)). Residues 29–114 (CTGSPGIPGV…RGPKGGSGDY (86 aa)) are disordered. Residues Pro-33, Pro-36, Pro-39, Pro-51, and Pro-54 each carry the 4-hydroxyproline modification. Residues Lys-57 and Lys-60 each carry the 5-hydroxylysine modification. At Pro-63 the chain carries 4-hydroxyproline. Over residues 68-77 (DHGELGEKGD) the composition is skewed to basic and acidic residues. A 5-hydroxylysine modification is found at Lys-75. Positions 78–96 (AGIPGIPGKVGPKGPVGPK) are enriched in low complexity. 2 positions are modified to 4-hydroxyproline: Pro-81 and Pro-84. 5-hydroxylysine occurs at positions 90 and 96. 4-hydroxyproline occurs at positions 99 and 102. Residue Lys-108 is modified to 5-hydroxylysine. In terms of domain architecture, C1q spans 115–253 (KATQKVAFSA…GFLLFPDMDV (139 aa)). A disulfide bond links Cys-179 and Cys-198. 3 residues coordinate Ca(2+): Asp-199, Tyr-200, and Gln-206.

In terms of assembly, core component of the complement C1 complex, a calcium-dependent complex composed of 1 molecule of the C1Q subcomplex, 2 molecules of C1R and 2 molecules of C1S. The C1Q subcomplex is composed 18 subunits: 3 chains of C1QA, C1QB, and C1QC trimerize to form 6 collagen-like triple helices connected to six globular ligand-recognition modules (C1q domain). In terms of processing, hydroxylated on lysine and proline residues. Hydroxylated lysine residues can be glycosylated. Human C1Q contains up to 68.3 hydroxylysine-galactosylglucose residues and up to 2.5 hydroxylysine-galactose per molecule. Total percentage hydroxylysine residues glycosylated is 86.4%. Highest levels in spleen, lung and brain. Weaker expression in kidney and liver. In the spleen, localized mainly to the red pulp, in cells mainly of monocyte-macrophage lineage. In white pulp, localized in specific dendritic cells such as those from the periarteriolar lymphatic sheath (PALS).

The protein localises to the secreted. Its subcellular location is the cell surface. With respect to regulation, the C1Q subcomplex is inhibited by sulfated molecules, such as triterpenoid sulfates, heparan sulfate, or chondroitin sulfates. Core component of the complement C1 complex, a multiprotein complex that initiates the classical pathway of the complement system, a cascade of proteins that leads to phagocytosis and breakdown of pathogens and signaling that strengthens the adaptive immune system. The classical complement pathway is initiated by the C1Q subcomplex of the C1 complex, which specifically binds IgG or IgM immunoglobulins complexed with antigens, forming antigen-antibody complexes on the surface of pathogens: C1QA, together with C1QB and C1QC, specifically recognizes and binds the Fc regions of IgG or IgM via its C1q domain. Immunoglobulin-binding activates the proenzyme C1R, which cleaves C1S, initiating the proteolytic cascade of the complement system. The C1Q subcomplex is activated by a hexamer of IgG complexed with antigens, while it is activated by a pentameric IgM. The C1Q subcomplex also recognizes and binds phosphatidylserine exposed on the surface of cells undergoing programmed cell death, possibly promoting activation of the complement system. This is Complement C1q subcomponent subunit B from Rattus norvegicus (Rat).